Reading from the N-terminus, the 333-residue chain is Ketol-acid reductoisomerase (NADP(+)) (333 aa).

In terms of domain architecture, KARI N-terminal Rossmann spans 6-186; that stretch reads TRVYTECDAD…GALRAGAIQT (181 aa). NADP(+)-binding positions include 29-32, Lys52, Ser55, Ser57, and 87-90; these read YGSQ and DPAQ. Residue His112 is part of the active site. Gly138 is a binding site for NADP(+). Residues 187–332 enclose the KARI C-terminal knotted domain; it reads TFTEETETDL…ARLRALFSWS (146 aa). Residues Asp195, Glu199, Glu231, and Glu235 each coordinate Mg(2+). A substrate-binding site is contributed by Ser256.

Belongs to the ketol-acid reductoisomerase family. Mg(2+) serves as cofactor.

It catalyses the reaction (2R)-2,3-dihydroxy-3-methylbutanoate + NADP(+) = (2S)-2-acetolactate + NADPH + H(+). The enzyme catalyses (2R,3R)-2,3-dihydroxy-3-methylpentanoate + NADP(+) = (S)-2-ethyl-2-hydroxy-3-oxobutanoate + NADPH + H(+). It participates in amino-acid biosynthesis; L-isoleucine biosynthesis; L-isoleucine from 2-oxobutanoate: step 2/4. Its pathway is amino-acid biosynthesis; L-valine biosynthesis; L-valine from pyruvate: step 2/4. In terms of biological role, involved in the biosynthesis of branched-chain amino acids (BCAA). Catalyzes an alkyl-migration followed by a ketol-acid reduction of (S)-2-acetolactate (S2AL) to yield (R)-2,3-dihydroxy-isovalerate. In the isomerase reaction, S2AL is rearranged via a Mg-dependent methyl migration to produce 3-hydroxy-3-methyl-2-ketobutyrate (HMKB). In the reductase reaction, this 2-ketoacid undergoes a metal-dependent reduction by NADPH to yield (R)-2,3-dihydroxy-isovalerate. The chain is Ketol-acid reductoisomerase (NADP(+)) from Tropheryma whipplei (strain Twist) (Whipple's bacillus).